The following is a 240-amino-acid chain: Transcriptional regulatory protein ChvI (240 aa).

The 114-residue stretch at 3–116 (TIALVDDDRN…LLVERVKAIL (114 aa)) folds into the Response regulatory domain. Residues aspartate 8, aspartate 9, and aspartate 52 each coordinate Mg(2+). Residue aspartate 52 is modified to 4-aspartylphosphate. Positions 139–238 (SRSLERGQLV…LYGVGYRFRE (100 aa)) form a DNA-binding region, ompR/PhoB-type.

Mg(2+) serves as cofactor. Phosphorylated by ChvG.

Its subcellular location is the cytoplasm. The protein operates within glycan metabolism; exopolysaccharide biosynthesis. Its function is as follows. Member of a two-component regulatory system ChvG(ExoS)/ChvI involved in regulating the production of succinoglycan. The chain is Transcriptional regulatory protein ChvI (chvI) from Rhizobium meliloti (strain 1021) (Ensifer meliloti).